We begin with the raw amino-acid sequence, 109 residues long: Ribonuclease P protein component (109 aa).

It belongs to the RnpA family. As to quaternary structure, consists of a catalytic RNA component (M1 or rnpB) and a protein subunit.

It carries out the reaction Endonucleolytic cleavage of RNA, removing 5'-extranucleotides from tRNA precursor.. RNaseP catalyzes the removal of the 5'-leader sequence from pre-tRNA to produce the mature 5'-terminus. It can also cleave other RNA substrates such as 4.5S RNA. The protein component plays an auxiliary but essential role in vivo by binding to the 5'-leader sequence and broadening the substrate specificity of the ribozyme. In Mycoplasma mycoides subsp. mycoides SC (strain CCUG 32753 / NCTC 10114 / PG1), this protein is Ribonuclease P protein component.